Here is a 509-residue protein sequence, read N- to C-terminus: ESX-2 secretion system protein eccD2 (509 aa).

11 consecutive transmembrane segments (helical) span residues 135–155, 170–190, 196–216, 222–242, 248–268, 281–301, 364–384, 389–409, 418–438, 449–469, and 487–507; these read LTAAHTAMAIIAMAVGVVLAL, AMAGGIGVLLVIGALVVWWGW, LFSGFGWLAVVLLAVAAACAP, AAHALIGLVVVVLGAITIGVA, QTAVVTAVVTVCGILAAVAAV, ICVLVGLLVLIRMTPTVALWV, VQVGMCVGVSLVLPAAVWGVL, PWAWLALLVAGLTVGLFITQG, AVALVCGASAAVCAGVLKYAL, LWPAIFVAAFAALGLAVALVV, and VLAMIALLPAAAALGGLFAWL.

This sequence belongs to the EccD/Snm4 family. Part of the ESX-2 / type VII secretion system (T7SS), which is composed of cytosolic and membrane components.

It localises to the cell membrane. The sequence is that of ESX-2 secretion system protein eccD2 (eccD2) from Mycobacterium tuberculosis (strain CDC 1551 / Oshkosh).